A 165-amino-acid chain; its full sequence is GTPase activating protein 1 (165 aa).

Positions 1 to 105 (MLGHLVGLVK…VVKMKIEGVA (105 aa)) constitute a C2 domain. Ca(2+) contacts are provided by Arg-22, Asp-23, Asp-28, Asp-74, Lys-75, Asp-76, and Asp-81.

Belongs to the plant CAR protein family. In terms of assembly, binds to PYR/PYL/RCAR abscisic acid intracellular receptors in an ABA-independent manner, both at the plasma membrane and in the nucleus. Binds phospholipids in a Ca(2+)-dependent manner. Interacts with YchF1.

It localises to the cell membrane. It is found in the nucleus. Its subcellular location is the cytoplasm. The protein resides in the cytosol. Functionally, mediates the transient calcium-dependent interaction of PYR/PYL/RCAR abscisic acid (ABA) receptors with the plasma membrane and thus regulates ABA sensitivity. Stimulates the GTPase/ATPase activities of YchF1, and regulates its subcellular localization. Promotes tolerance towards salinity stress by limiting the accumulation of reactive oxygen species (ROS). Promotes resistance to bacterial pathogens. This is GTPase activating protein 1 from Oryza sativa subsp. indica (Rice).